Consider the following 272-residue polypeptide: MHAASREALERLEQTLDQGLNETSDKVGTGVNTGTELFDVVELLDSDRGLRVALIDPARDTNTRVELAKSLFGGKVSASTEEIVSAAVSQSWSNTRDLRDGLVKLGRLALLRAADAQGQQDRVEDELFQLARIIEREPELELKLADRAASPDARRDLLAKVLYGKVTSTTEALALQAIGRLRQRPVEELDSLVDEVAALEGRTVARVRAAAALGEQQKSTLSDKLEKIYGRKIAVHSEVDTSLLGGAVIRVGHEVIDGSTAGNLRRLRASIA.

The protein belongs to the ATPase delta chain family. F-type ATPases have 2 components, F(1) - the catalytic core - and F(0) - the membrane proton channel. F(1) has five subunits: alpha(3), beta(3), gamma(1), delta(1), epsilon(1). F(0) has three main subunits: a(1), b(2) and c(10-14). The alpha and beta chains form an alternating ring which encloses part of the gamma chain. F(1) is attached to F(0) by a central stalk formed by the gamma and epsilon chains, while a peripheral stalk is formed by the delta and b chains.

Its subcellular location is the cell membrane. Its function is as follows. F(1)F(0) ATP synthase produces ATP from ADP in the presence of a proton or sodium gradient. F-type ATPases consist of two structural domains, F(1) containing the extramembraneous catalytic core and F(0) containing the membrane proton channel, linked together by a central stalk and a peripheral stalk. During catalysis, ATP synthesis in the catalytic domain of F(1) is coupled via a rotary mechanism of the central stalk subunits to proton translocation. This protein is part of the stalk that links CF(0) to CF(1). It either transmits conformational changes from CF(0) to CF(1) or is implicated in proton conduction. The protein is ATP synthase subunit delta of Corynebacterium jeikeium (strain K411).